Here is a 185-residue protein sequence, read N- to C-terminus: Translocon-associated protein subunit gamma (185 aa).

Met-1 is modified (N-acetylmethionine). The Lumenal portion of the chain corresponds to 1–27 (MAPKGGPKQQSEEDLLLQDFSRNLSAK). Ser-11 is subject to Phosphoserine. A helical membrane pass occupies residues 28-48 (SSALFFGNAFIVSAIPIWLYW). Over 49-54 (RIWHMD) the chain is Cytoplasmic. The chain crosses the membrane as a helical span at residues 55–76 (LIQSAVLYSVMTLVSTYLVAFA). Residues 77–135 (YKNVKFVLKHKVAQKREDAVSKEVTRKLSEADNRKMSRKEKDERILWKKNEVADYEATT) are Lumenal-facing. At Ser-105 the chain carries Phosphoserine. Residues 136–157 (FSIFYNNTLFLVLVIVASFFIL) form a helical membrane-spanning segment. Over 158-163 (KNFNPT) the chain is Cytoplasmic. Residues 164–184 (VNYILSISASSGLIALLSTGS) form a helical membrane-spanning segment.

This sequence belongs to the TRAP-gamma family. In terms of assembly, heterotetramer of TRAP-alpha, TRAP-beta, TRAP-delta and TRAP-gamma.

It localises to the endoplasmic reticulum membrane. Functionally, TRAP proteins are part of a complex whose function is to bind calcium to the ER membrane and thereby regulate the retention of ER resident proteins. This is Translocon-associated protein subunit gamma (SSR3) from Bos taurus (Bovine).